A 278-amino-acid chain; its full sequence is Sulfur carrier protein FdhD (278 aa).

The Cysteine persulfide intermediate role is filled by Cys121. Residue 260–265 (FCKPGR) participates in Mo-bis(molybdopterin guanine dinucleotide) binding.

Belongs to the FdhD family.

Its subcellular location is the cytoplasm. Required for formate dehydrogenase (FDH) activity. Acts as a sulfur carrier protein that transfers sulfur from IscS to the molybdenum cofactor prior to its insertion into FDH. This Klebsiella pneumoniae subsp. pneumoniae (strain ATCC 700721 / MGH 78578) protein is Sulfur carrier protein FdhD.